Reading from the N-terminus, the 227-residue chain is tRNA (guanine-N(7)-)-methyltransferase (227 aa).

Positions 1 to 21 (MPDMTMKSQPDRLYGRQRGHA) are disordered. S-adenosyl-L-methionine is bound by residues E54, E79, D114, and D136. D136 is an active-site residue. Residues K140, D172, and 206 to 209 (TRYE) contribute to the substrate site.

The protein belongs to the class I-like SAM-binding methyltransferase superfamily. TrmB family.

It carries out the reaction guanosine(46) in tRNA + S-adenosyl-L-methionine = N(7)-methylguanosine(46) in tRNA + S-adenosyl-L-homocysteine. It functions in the pathway tRNA modification; N(7)-methylguanine-tRNA biosynthesis. Functionally, catalyzes the formation of N(7)-methylguanine at position 46 (m7G46) in tRNA. The chain is tRNA (guanine-N(7)-)-methyltransferase from Granulibacter bethesdensis (strain ATCC BAA-1260 / CGDNIH1).